A 787-amino-acid chain; its full sequence is Glutamine-dependent NAD(+) synthetase (787 aa).

The region spanning 5 to 275 is the CN hydrolase domain; sequence VTVAVSTLNQ…VEVTLATIDL (271 aa). Residue E45 is the Proton acceptor; for glutaminase activity of the active site. K114 (for glutaminase activity) is an active-site residue. C175 functions as the Nucleophile; for glutaminase activity in the catalytic mechanism. The tract at residues 325-787 is ligase; the sequence is MHTPEEEIAL…KIKDRTGIPV (463 aa). Residue 355–362 coordinates ATP; it reads PLSGGVDS. The active site involves S357. Residue S703 is modified to Phosphoserine.

It in the C-terminal section; belongs to the NAD synthetase family.

The enzyme catalyses deamido-NAD(+) + L-glutamine + ATP + H2O = L-glutamate + AMP + diphosphate + NAD(+) + H(+). The protein operates within cofactor biosynthesis; NAD(+) biosynthesis; NAD(+) from deamido-NAD(+) (L-Gln route): step 1/1. Functionally, catalyzes the ATP-dependent amidation of deamido-NAD to form NAD. Uses L-glutamine as a nitrogen source. Because of its role in energy metabolism, involved in the modulation of aged-related cardiac function, mobility, and lifespan. This Drosophila melanogaster (Fruit fly) protein is Glutamine-dependent NAD(+) synthetase.